A 344-amino-acid polypeptide reads, in one-letter code: Dihydroorotase (344 aa).

Residues His13 and His15 each coordinate Zn(2+). Substrate contacts are provided by residues 15–17 (HLR) and Asn41. Zn(2+) contacts are provided by Lys98, His135, and His173. An N6-carboxylysine modification is found at Lys98. A substrate-binding site is contributed by His135. A substrate-binding site is contributed by Leu218. Asp247 is a binding site for Zn(2+). Asp247 is an active-site residue. Substrate is bound by residues His251 and Ala263.

Belongs to the metallo-dependent hydrolases superfamily. DHOase family. Class II DHOase subfamily. In terms of assembly, homodimer. The cofactor is Zn(2+).

It catalyses the reaction (S)-dihydroorotate + H2O = N-carbamoyl-L-aspartate + H(+). It participates in pyrimidine metabolism; UMP biosynthesis via de novo pathway; (S)-dihydroorotate from bicarbonate: step 3/3. Catalyzes the reversible cyclization of carbamoyl aspartate to dihydroorotate. In Neisseria gonorrhoeae (strain NCCP11945), this protein is Dihydroorotase.